A 376-amino-acid chain; its full sequence is MASYPCHQHASAFDQAARSRGHNNRRTALRPRRQQKATEVRLEQKMPTLLRVYIDGPHGMGKTTTTQLLVALGSRDDIVYVPEPMTYWRVLGASETIANIYTTQHRLDQGEISAGDAAVVMTSAQITMGMPYAVTDAVLAPHIGGEAGSSHAPPPALTLIFDRHPIAALLCYPAARYLMGSMTPQAVLAFVALIPPTLPGTNIVLGALPEDRHIDRLAKRQRPGERLDLAMLAAIRRVYGLLANTVRYLQGGGSWREDWGQLSGAAVPPQGAEPQSNAGPRPHIGDTLFTLFRAPELLAPNGDLYNVFAWALDVLAKRLRPMHVFILDYDQSPAGCRDALLQLTSGMVQTHVTTPGSIPTICDLARTFAREMGEAN.

Residues 1–38 (MASYPCHQHASAFDQAARSRGHNNRRTALRPRRQQKAT) are disordered. Residues 19 to 35 (SRGHNNRRTALRPRRQQ) show a composition bias toward basic residues. Position 56 to 63 (56 to 63 (GPHGMGKT)) interacts with ATP. E83 serves as the catalytic Proton acceptor. Residues Y101 and Q125 each contribute to the substrate site. R216 serves as a coordination point for ATP. Position 222 (R222) interacts with substrate.

The protein belongs to the herpesviridae thymidine kinase family. Homodimer.

It carries out the reaction thymidine + ATP = dTMP + ADP + H(+). Its function is as follows. Catalyzes the transfer of the gamma-phospho group of ATP to thymidine to generate dTMP in the salvage pathway of pyrimidine synthesis. The dTMP serves as a substrate for DNA polymerase during viral DNA replication. Allows the virus to be reactivated and to grow in non-proliferative cells lacking a high concentration of phosphorylated nucleic acid precursors. In Homo sapiens (Human), this protein is Thymidine kinase.